The primary structure comprises 337 residues: Phosphatidate cytidylyltransferase, mitochondrial (337 aa).

This sequence belongs to the TAM41 family. Mg(2+) is required as a cofactor.

The protein localises to the mitochondrion inner membrane. The enzyme catalyses a 1,2-diacyl-sn-glycero-3-phosphate + CTP + H(+) = a CDP-1,2-diacyl-sn-glycerol + diphosphate. The protein operates within phospholipid metabolism; CDP-diacylglycerol biosynthesis; CDP-diacylglycerol from sn-glycerol 3-phosphate: step 3/3. In terms of biological role, catalyzes the conversion of phosphatidic acid (PA) to CDP-diacylglycerol (CDP-DAG), an essential intermediate in the synthesis of phosphatidylglycerol, cardiolipin and phosphatidylinositol. The polypeptide is Phosphatidate cytidylyltransferase, mitochondrial (Tamm41) (Mus musculus (Mouse)).